The sequence spans 111 residues: HTH-type transcriptional regulator SinR (111 aa).

The HTH cro/C1-type domain maps to 6–61 (IKQYRKEKGYSLSELAEKAGVAKSYLSSIERNLQTNPSIQFLEKVSAVLDVSVHTL). Residues 17-36 (LSELAEKAGVAKSYLSSIER) constitute a DNA-binding region (H-T-H motif). Residues 65–103 (KHETEYDGQLDSEWEKLVRDAMTSGVSKKQFREFLDYQK) form the Sin domain.

Homotetramer in the absence of SinI. Heterodimer with SinI. Interaction with SinI disrupts the SinR tetramer and its repressor activity. Interacts with hpr.

In terms of biological role, negative as well as positive regulator of alternate developmental processes that are induced at the end of vegetative growth in response to nutrient depletion. Binds to the alkaline protease (aprE) gene at two sites. Also acts as a repressor of the key sporulation gene spo0A. Negatively regulates transcription of the eps operon, which is responsible for the biosynthesis of an exopolysaccharide involved in biofilm formation; therefore it could govern the transition between a state in which bacteria swim or swarm and a state in which bacteria assemble into multicellular communities. Acts with Hpr as a corepressor of epr expression. Also negatively regulates transcription of the lutABC operon, which is required for lactate utilization. Repressor activity is regulated by SinI. The sequence is that of HTH-type transcriptional regulator SinR (sinR) from Bacillus subtilis (strain 168).